A 161-amino-acid polypeptide reads, in one-letter code: Dermonecrotic toxin LarSicTox-alphaI-1 (161 aa).

The protein belongs to the arthropod phospholipase D family. Class II subfamily. Mg(2+) serves as cofactor. Contains 2 disulfide bonds. In terms of tissue distribution, expressed by the venom gland.

It is found in the secreted. The enzyme catalyses an N-(acyl)-sphingosylphosphocholine = an N-(acyl)-sphingosyl-1,3-cyclic phosphate + choline. It carries out the reaction an N-(acyl)-sphingosylphosphoethanolamine = an N-(acyl)-sphingosyl-1,3-cyclic phosphate + ethanolamine. The catalysed reaction is a 1-acyl-sn-glycero-3-phosphocholine = a 1-acyl-sn-glycero-2,3-cyclic phosphate + choline. It catalyses the reaction a 1-acyl-sn-glycero-3-phosphoethanolamine = a 1-acyl-sn-glycero-2,3-cyclic phosphate + ethanolamine. In terms of biological role, dermonecrotic toxins cleave the phosphodiester linkage between the phosphate and headgroup of certain phospholipids (sphingolipid and lysolipid substrates), forming an alcohol (often choline) and a cyclic phosphate. This toxin acts on sphingomyelin (SM). It may also act on ceramide phosphoethanolamine (CPE), lysophosphatidylcholine (LPC) and lysophosphatidylethanolamine (LPE), but not on lysophosphatidylserine (LPS), and lysophosphatidylglycerol (LPG). It acts by transphosphatidylation, releasing exclusively cyclic phosphate products as second products. Induces dermonecrosis, hemolysis, increased vascular permeability, edema, inflammatory response, and platelet aggregation. This Loxosceles arizonica (Arizona brown spider) protein is Dermonecrotic toxin LarSicTox-alphaI-1.